Consider the following 83-residue polypeptide: Salivary thrombin inhibitor anophelin (83 aa).

The N-terminal stretch at 1 to 22 is a signal peptide; that stretch reads MANKLVLISLLCVVLVAKITQA. Residues 25–51 form a disordered region; it reads QYAPGDEPSYDEDTDDSDKLVENDTSI. The N-linked (GlcNAc...) asparagine glycan is linked to Asn47. Residues 54-83 are sufficient for host thrombin inhibition; it reads EDYAAIEASLSETFNTAADPGRRLGEGSKP. Residues 56–62 are blocks exosite I of host thrombin; it reads YAAIEAS. Residues 64–83 are disordered; it reads SETFNTAADPGRRLGEGSKP. The tract at residues 72-75 is blocks active site cleft of host thrombin in a reverse direction compared to substrates; the sequence is DPGR. Residues 73-83 are compositionally biased toward basic and acidic residues; sequence PGRRLGEGSKP.

Belongs to the anophelin family. As to quaternary structure, interacts with human F2 (thrombin); the interaction results in thrombin inhibition. In terms of tissue distribution, salivary gland (at protein level).

The protein localises to the secreted. With respect to regulation, increasing concentration of NaCl decreases affinity for thrombin. Salivary protein with anticoagulant activity that inhibits host thrombin (F2); binds to the proteinase in a reverse orientation (opposite to substrates). Inhibits thrombin-induced platelet aggregation. The chain is Salivary thrombin inhibitor anophelin from Anopheles albimanus (New world malaria mosquito).